A 330-amino-acid chain; its full sequence is Glycerol-3-phosphate dehydrogenase [NAD(P)+] 1 (330 aa).

Residues tryptophan 15, arginine 35, and lysine 105 each contribute to the NADPH site. Lysine 105, glycine 133, and threonine 135 together coordinate sn-glycerol 3-phosphate. Residue alanine 137 participates in NADPH binding. Positions 188, 241, 251, 252, and 253 each coordinate sn-glycerol 3-phosphate. Catalysis depends on lysine 188, which acts as the Proton acceptor. Position 252 (arginine 252) interacts with NADPH. NADPH is bound by residues isoleucine 276 and glutamate 278.

This sequence belongs to the NAD-dependent glycerol-3-phosphate dehydrogenase family.

It localises to the cytoplasm. The enzyme catalyses sn-glycerol 3-phosphate + NAD(+) = dihydroxyacetone phosphate + NADH + H(+). It carries out the reaction sn-glycerol 3-phosphate + NADP(+) = dihydroxyacetone phosphate + NADPH + H(+). It participates in membrane lipid metabolism; glycerophospholipid metabolism. Catalyzes the reduction of the glycolytic intermediate dihydroxyacetone phosphate (DHAP) to sn-glycerol 3-phosphate (G3P), the key precursor for phospholipid synthesis. The protein is Glycerol-3-phosphate dehydrogenase [NAD(P)+] 1 of Sphingopyxis alaskensis (strain DSM 13593 / LMG 18877 / RB2256) (Sphingomonas alaskensis).